We begin with the raw amino-acid sequence, 121 residues long: Fluoride-specific ion channel FluC 2 (121 aa).

A run of 4 helical transmembrane segments spans residues tyrosine 3–leucine 23, serine 27–leucine 47, glycine 64–valine 84, and isoleucine 92–phenylalanine 112. Na(+) contacts are provided by glycine 71 and threonine 74.

It belongs to the fluoride channel Fluc/FEX (TC 1.A.43) family.

The protein localises to the cell membrane. The catalysed reaction is fluoride(in) = fluoride(out). Na(+) is not transported, but it plays an essential structural role and its presence is essential for fluoride channel function. In terms of biological role, fluoride-specific ion channel. Important for reducing fluoride concentration in the cell, thus reducing its toxicity. The chain is Fluoride-specific ion channel FluC 2 from Staphylococcus haemolyticus (strain JCSC1435).